A 904-amino-acid polypeptide reads, in one-letter code: DNA mismatch repair protein MutS (904 aa).

Position 638–645 (638–645) interacts with ATP; the sequence is GPNMAGKS. A disordered region spans residues 825 to 869; that stretch reads KSKADGTRRPASYHEAQPLLPGMPEPPSTASAEPPQTVTPPEPPV.

The protein belongs to the DNA mismatch repair MutS family.

Functionally, this protein is involved in the repair of mismatches in DNA. It is possible that it carries out the mismatch recognition step. This protein has a weak ATPase activity. The polypeptide is DNA mismatch repair protein MutS (Oleidesulfovibrio alaskensis (strain ATCC BAA-1058 / DSM 17464 / G20) (Desulfovibrio alaskensis)).